The chain runs to 259 residues: Malonyl-[acyl-carrier protein] O-methyltransferase 2 (259 aa).

It belongs to the methyltransferase superfamily.

The catalysed reaction is malonyl-[ACP] + S-adenosyl-L-methionine = malonyl-[ACP] methyl ester + S-adenosyl-L-homocysteine. It functions in the pathway cofactor biosynthesis; biotin biosynthesis. Functionally, converts the free carboxyl group of a malonyl-thioester to its methyl ester by transfer of a methyl group from S-adenosyl-L-methionine (SAM). It allows to synthesize pimeloyl-ACP via the fatty acid synthetic pathway. The polypeptide is Malonyl-[acyl-carrier protein] O-methyltransferase 2 (Ilyobacter polytropus (strain ATCC 51220 / DSM 2926 / LMG 16218 / CuHBu1)).